We begin with the raw amino-acid sequence, 560 residues long: Long-chain-fatty-acid--CoA ligase (560 aa).

Belongs to the ATP-dependent AMP-binding enzyme family.

It catalyses the reaction a long-chain fatty acid + ATP + CoA = a long-chain fatty acyl-CoA + AMP + diphosphate. The sequence is that of Long-chain-fatty-acid--CoA ligase (lcfA) from Bacillus subtilis (strain 168).